The primary structure comprises 442 residues: Vacuolar zinc transporter ZRC1 (442 aa).

Residues 1-8 lie on the Cytoplasmic side of the membrane; the sequence is MITGKELR. Residues 9–29 form a helical membrane-spanning segment; that stretch reads IISLLTLDTVFFLLEITIGYM. Residues 30–32 lie on the Vacuolar side of the membrane; it reads SHS. Residues 33-53 traverse the membrane as a helical segment; it reads LALIADSFHMLNDIISLLVAL. Over 54 to 75 the chain is Cytoplasmic; it reads WAVDVAKNRGPDAKYTYGWKRA. Residues 76–96 traverse the membrane as a helical segment; the sequence is EILGALINAVFLIALCFSIMI. Topologically, residues 97–112 are vacuolar; sequence EALQRLIEPQEIQNPR. The helical transmembrane segment at 113–133 threads the bilayer; sequence LVLYVGVAGLISNVVGLFLFH. Over 134–235 the chain is Cytoplasmic; sequence DHGSDSLHSH…GHRSLNMHGV (102 aa). 3 short sequence motifs (histidine repeat) span residues 141–145, 163–167, and 216–220; these read HSHSH and HDHSH. Disordered stretches follow at residues 141–170 and 208–227; these read HSHS…HASL and QPLL…KPGH. Positions 149–170 are enriched in polar residues; sequence ESGNNDLDIESNATHSHSHASL. Residues 212–224 are compositionally biased toward basic and acidic residues; that stretch reads NHDDHDHSHESKK. Residues 236–256 form a helical membrane-spanning segment; that stretch reads FLHVLGDALGNIGVIAAALFI. The Vacuolar segment spans residues 257–265; sequence WKTEYSWRY. Residues 266–286 traverse the membrane as a helical segment; the sequence is YSDPIVSLIITIIIFSSALPL. Residues 287-442 are Cytoplasmic-facing; sequence SRRASRILLQ…AVNCNTSNCL (156 aa). Lysine 357 is covalently cross-linked (Glycyl lysine isopeptide (Lys-Gly) (interchain with G-Cter in ubiquitin)). 3 positions are modified to phosphoserine: serine 387, serine 393, and serine 397. The segment at 391–419 is disordered; that stretch reads GGSPSSSQEAFDSHGNTEHGRKKRSPTAY.

Belongs to the cation diffusion facilitator (CDF) transporter (TC 2.A.4) family. SLC30A subfamily.

Its subcellular location is the vacuole membrane. It catalyses the reaction Zn(2+)(in) = Zn(2+)(out). In terms of biological role, vacuolar transporter that regulates zinc homeostasis by mediating zinc transport and storage into the vacuole. ZRC1 senses zinc availability in the cytosol, which might be performed through the histidine repeat motifs, and transports zinc from the cytosol to the vacuole if zinc in cytosol is abundant, conferring resistance to zinc toxicity. Plays a role in resistance to zinc shock resulting from sudden influx of zinc into cytoplasm when ZRT1 and ZRT2 are induced in response to zinc depletion. This is Vacuolar zinc transporter ZRC1 from Saccharomyces cerevisiae (strain ATCC 204508 / S288c) (Baker's yeast).